Consider the following 173-residue polypeptide: Orotate phosphoribosyltransferase (173 aa).

5-phospho-alpha-D-ribose 1-diphosphate is bound by residues Arg-87, Lys-88, Lys-91, and 113 to 121; that span reads EDIATTGQS. Orotate contacts are provided by Thr-117 and Arg-145.

It belongs to the purine/pyrimidine phosphoribosyltransferase family. PyrE subfamily. As to quaternary structure, homodimer. Mg(2+) is required as a cofactor.

The catalysed reaction is orotidine 5'-phosphate + diphosphate = orotate + 5-phospho-alpha-D-ribose 1-diphosphate. Its pathway is pyrimidine metabolism; UMP biosynthesis via de novo pathway; UMP from orotate: step 1/2. Its function is as follows. Catalyzes the transfer of a ribosyl phosphate group from 5-phosphoribose 1-diphosphate to orotate, leading to the formation of orotidine monophosphate (OMP). The sequence is that of Orotate phosphoribosyltransferase from Natronomonas pharaonis (strain ATCC 35678 / DSM 2160 / CIP 103997 / JCM 8858 / NBRC 14720 / NCIMB 2260 / Gabara) (Halobacterium pharaonis).